The primary structure comprises 412 residues: Homoserine dehydrogenase (412 aa).

NADP(+)-binding positions include Leu-9–Gly-16 and Lys-105. A substrate-binding site is contributed by Glu-190. Lys-205 functions as the Proton donor in the catalytic mechanism. The ACT domain occupies Tyr-330–Met-407.

The protein belongs to the homoserine dehydrogenase family.

It catalyses the reaction L-homoserine + NADP(+) = L-aspartate 4-semialdehyde + NADPH + H(+). It carries out the reaction L-homoserine + NAD(+) = L-aspartate 4-semialdehyde + NADH + H(+). Its pathway is amino-acid biosynthesis; L-methionine biosynthesis via de novo pathway; L-homoserine from L-aspartate: step 3/3. The protein operates within amino-acid biosynthesis; L-threonine biosynthesis; L-threonine from L-aspartate: step 3/5. This is Homoserine dehydrogenase (hom) from Methylobacillus glycogenes.